A 306-amino-acid polypeptide reads, in one-letter code: Eukaryotic translation initiation factor 2 subunit alpha (306 aa).

Residues 17–88 (DELVVVNVRQ…EKGYIDLSKR (72 aa)) form the S1 motif domain. A Phosphoserine modification is found at serine 52. At threonine 179 the chain carries Phosphothreonine. Serine 273, serine 295, serine 303, and serine 305 each carry phosphoserine.

This sequence belongs to the eIF-2-alpha family. As to quaternary structure, eukaryotic translation initiation factor 2 eIF2 is a heterotrimeric complex composed of an alpha, a beta and a gamma subunit.

It is found in the cytoplasm. The protein localises to the cytosol. EIF-2 functions in the early steps of protein synthesis by forming a ternary complex with GTP and initiator tRNA. This complex binds to a 40S ribosomal subunit, followed by mRNA binding to form a 43S pre-initiation complex. Junction of the 60S ribosomal subunit to form the 80S initiation complex is preceded by hydrolysis of the GTP bound to eIF-2 and release of an eIF-2-GDP binary complex. In order for eIF-2 to recycle and catalyze another round of initiation, the GDP bound to eIF-2 must exchange with GTP by way of a reaction catalyzed by eIF2B. The polypeptide is Eukaryotic translation initiation factor 2 subunit alpha (tif211) (Schizosaccharomyces pombe (strain 972 / ATCC 24843) (Fission yeast)).